The following is a 494-amino-acid chain: Alpha-amylase 1 (494 aa).

The signal sequence occupies residues 1-18; sequence MFLAKSIVCLALLAVANA. Cys-46 and Cys-102 are disulfide-bonded. 3 residues coordinate Ca(2+): Asn-116, Arg-165, and Asp-174. Cys-153 and Cys-167 are joined by a disulfide. Arg-202 contacts chloride. Asp-204 acts as the Nucleophile in catalysis. Residue His-208 participates in Ca(2+) binding. The Proton donor role is filled by Glu-241. Chloride-binding residues include Asn-304 and Arg-343. The segment at 350–370 is disordered; the sequence is FTDTDQGPPTTDGQNIASPSF. Low complexity predominate over residues 351-363; it reads TDTDQGPPTTDGQ. 2 disulfides stabilise this stretch: Cys-376-Cys-382 and Cys-448-Cys-460.

This sequence belongs to the glycosyl hydrolase 13 family. Monomer. The cofactor is Ca(2+). Chloride is required as a cofactor.

It carries out the reaction Endohydrolysis of (1-&gt;4)-alpha-D-glucosidic linkages in polysaccharides containing three or more (1-&gt;4)-alpha-linked D-glucose units.. The sequence is that of Alpha-amylase 1 (Amy35) from Drosophila ananassae (Fruit fly).